A 468-amino-acid chain; its full sequence is Peroxisome proliferator-activated receptor alpha (468 aa).

The tract at residues 1–20 (MVDTESQICPLSPFGDDDLE) is disordered. The nuclear receptor DNA-binding region spans 99–173 (NIECRICGDK…DGMSHNAIRF (75 aa)). 2 NR C4-type zinc fingers span residues 102–122 (CRIC…CEGC) and 139–161 (CDRS…FQKC). The NR LBD domain maps to 239–466 (FVIHDMETLC…HPLLQEIYRD (228 aa)). Positions 304–433 (DQVTLLKYGV…PKLLQKMADL (130 aa)) are required for heterodimerization with RXRA.

It belongs to the nuclear hormone receptor family. NR1 subfamily. In terms of assembly, heterodimer; with RXRA. This heterodimerization is required for DNA binding and transactivation activity. Interacts with NCOA3 coactivator. Interacts with CITED2; the interaction stimulates its transcriptional activity. Also interacts with PPARBP in vitro. Interacts with AKAP13, LPIN1, PRDM16 and coactivator NCOA6. Interacts with ASXL1 and ASXL2. Interacts with PER2. Interacts with SIRT1; the interaction seems to be modulated by NAD(+) levels. Interacts with CRY1 and CRY2. In hepatocytes, interacts with PAQR3 and HUWE1; the interactions promote PPARA poylubiquitination and HUWE1-mediated degradation. In terms of processing, ubiquitinated by E3 ubiquitin-protein ligase HUWE1; leading to proteasomal degradation. Phosphorylated.

It localises to the nucleus. Ligand-activated transcription factor. Key regulator of lipid metabolism. Activated by the endogenous ligand 1-palmitoyl-2-oleoyl-sn-glycerol-3-phosphocholine (16:0/18:1-GPC). Activated by oleylethanolamide, a naturally occurring lipid that regulates satiety. Receptor for peroxisome proliferators such as hypolipidemic drugs and fatty acids. Regulates the peroxisomal beta-oxidation pathway of fatty acids. Functions as a transcription activator for the ACOX1 and P450 genes. Transactivation activity requires heterodimerization with RXRA and is antagonized by NR2C2. May be required for the propagation of clock information to metabolic pathways regulated by PER2. In Phascolarctos cinereus (Koala), this protein is Peroxisome proliferator-activated receptor alpha (PPARA).